A 172-amino-acid polypeptide reads, in one-letter code: Large ribosomal subunit protein uL10 (172 aa).

Belongs to the universal ribosomal protein uL10 family. As to quaternary structure, part of the ribosomal stalk of the 50S ribosomal subunit. The N-terminus interacts with L11 and the large rRNA to form the base of the stalk. The C-terminus forms an elongated spine to which L12 dimers bind in a sequential fashion forming a multimeric L10(L12)X complex.

Its function is as follows. Forms part of the ribosomal stalk, playing a central role in the interaction of the ribosome with GTP-bound translation factors. This Chlorobium chlorochromatii (strain CaD3) protein is Large ribosomal subunit protein uL10.